Consider the following 168-residue polypeptide: Photosystem I assembly protein Ycf3 (168 aa).

TPR repeat units lie at residues 35 to 68 (AFTY…EIDP), 72 to 105 (SYIL…NPFL), and 120 to 153 (GEQA…TPGN).

Belongs to the Ycf3 family.

The protein localises to the plastid. It localises to the chloroplast thylakoid membrane. Essential for the assembly of the photosystem I (PSI) complex. May act as a chaperone-like factor to guide the assembly of the PSI subunits. This chain is Photosystem I assembly protein Ycf3, found in Phalaenopsis aphrodite subsp. formosana (Moth orchid).